The following is a 432-amino-acid chain: Adenylosuccinate synthetase (432 aa).

GTP-binding positions include 13 to 19 and 41 to 43; these read GDEGKGK and GHT. Asp14 functions as the Proton acceptor in the catalytic mechanism. Positions 14 and 41 each coordinate Mg(2+). IMP is bound by residues 14-17, 39-42, Thr130, Arg144, Gln225, Thr240, and Arg304; these read DEGK and NAGH. The Proton donor role is filled by His42. 300–306 is a binding site for substrate; the sequence is ATTGRKR. GTP-binding positions include Arg306, 332–334, and 415–417; these read KLD and STG.

The protein belongs to the adenylosuccinate synthetase family. In terms of assembly, homodimer. Mg(2+) serves as cofactor.

Its subcellular location is the cytoplasm. The catalysed reaction is IMP + L-aspartate + GTP = N(6)-(1,2-dicarboxyethyl)-AMP + GDP + phosphate + 2 H(+). It functions in the pathway purine metabolism; AMP biosynthesis via de novo pathway; AMP from IMP: step 1/2. Its function is as follows. Plays an important role in the de novo pathway of purine nucleotide biosynthesis. Catalyzes the first committed step in the biosynthesis of AMP from IMP. The sequence is that of Adenylosuccinate synthetase from Vibrio cholerae serotype O1 (strain M66-2).